The following is a 110-amino-acid chain: Ig kappa chain V region 3547 (110 aa).

A framework-1 region spans residues 1–23; it reads AYDMTQTPSSVSAAVGGTVTINC. The tract at residues 24-34 is complementarity-determining-1; it reads QASEDISANLA. Residues 35–49 are framework-2; the sequence is WYQQKPGQPPKLLIY. A complementarity-determining-2 region spans residues 50–56; that stretch reads AASDLAS. Positions 57–88 are framework-3; it reads GVPSRFKGSGSGTEYTLTISGVQCADAATYYC. The complementarity-determining-3 stretch occupies residues 89 to 99; that stretch reads QSADYSGSAVT. Residues 100-109 are framework-4; that stretch reads FGGGTEVVVK.

This Oryctolagus cuniculus (Rabbit) protein is Ig kappa chain V region 3547.